The primary structure comprises 484 residues: Glycogen synthase (484 aa).

ADP-alpha-D-glucose is bound at residue Lys15.

This sequence belongs to the glycosyltransferase 1 family. Bacterial/plant glycogen synthase subfamily.

It carries out the reaction [(1-&gt;4)-alpha-D-glucosyl](n) + ADP-alpha-D-glucose = [(1-&gt;4)-alpha-D-glucosyl](n+1) + ADP + H(+). It functions in the pathway glycan biosynthesis; glycogen biosynthesis. Synthesizes alpha-1,4-glucan chains using ADP-glucose. The sequence is that of Glycogen synthase from Anoxybacillus flavithermus (strain DSM 21510 / WK1).